A 317-amino-acid polypeptide reads, in one-letter code: Acetyl-coenzyme A carboxylase carboxyl transferase subunit alpha (317 aa).

In terms of domain architecture, CoA carboxyltransferase C-terminal spans 39 to 293 (RLQKKSNDLT…KAVLEKQLHE (255 aa)).

It belongs to the AccA family. In terms of assembly, acetyl-CoA carboxylase is a heterohexamer composed of biotin carboxyl carrier protein (AccB), biotin carboxylase (AccC) and two subunits each of ACCase subunit alpha (AccA) and ACCase subunit beta (AccD).

The protein resides in the cytoplasm. It carries out the reaction N(6)-carboxybiotinyl-L-lysyl-[protein] + acetyl-CoA = N(6)-biotinyl-L-lysyl-[protein] + malonyl-CoA. It participates in lipid metabolism; malonyl-CoA biosynthesis; malonyl-CoA from acetyl-CoA: step 1/1. Functionally, component of the acetyl coenzyme A carboxylase (ACC) complex. First, biotin carboxylase catalyzes the carboxylation of biotin on its carrier protein (BCCP) and then the CO(2) group is transferred by the carboxyltransferase to acetyl-CoA to form malonyl-CoA. This is Acetyl-coenzyme A carboxylase carboxyl transferase subunit alpha from Neisseria gonorrhoeae (strain NCCP11945).